Consider the following 380-residue polypeptide: SAM and SH3 domain-containing protein 3 (380 aa).

The interval 1-76 (MLRRKPSNAS…KSGKKLGKKW (76 aa)) is disordered. Residues 22-41 (LQRSSSFKDFAKSKPSSPVV) are compositionally biased toward low complexity. Ser27, Ser34, and Ser42 each carry phosphoserine. Phosphothreonine is present on Thr61. The residue at position 97 (Ser97) is a Phosphoserine. 3 disordered regions span residues 98–174 (EEMA…TGPF), 237–256 (VGHARPSRRQSKGKRPKPKT), and 318–380 (TGSE…AGAP). At Thr103 the chain carries Phosphothreonine. Ser110 bears the Phosphoserine mark. At Thr112 the chain carries Phosphothreonine. Phosphoserine is present on Ser113. Tyr116 is subject to Phosphotyrosine. Ser120 carries the phosphoserine modification. The span at 143-152 (RQASTGSELC) shows a compositional bias: polar residues. The segment covering 153 to 164 (SPSPGSGSFGEE) has biased composition (low complexity). Residues 173–234 (PFCGRARVHT…KFIYVDVLPE (62 aa)) form the SH3 domain. The segment covering 241 to 255 (RPSRRQSKGKRPKPK) has biased composition (basic residues). An SAM domain is found at 252–316 (PKPKTLHELL…LTAAELLLDY (65 aa)). Residue Thr318 is modified to Phosphothreonine. Acidic residues predominate over residues 318–327 (TGSEEAEEGA). The residue at position 320 (Ser320) is a Phosphoserine.

May function as a signaling adapter protein in lymphocytes. This Homo sapiens (Human) protein is SAM and SH3 domain-containing protein 3 (SASH3).